The primary structure comprises 301 residues: Probable 2-(5''-triphosphoribosyl)-3'-dephosphocoenzyme-A synthase (301 aa).

The protein belongs to the CitG/MdcB family.

It catalyses the reaction 3'-dephospho-CoA + ATP = 2'-(5''-triphospho-alpha-D-ribosyl)-3'-dephospho-CoA + adenine. This Pectobacterium carotovorum subsp. carotovorum (strain PC1) protein is Probable 2-(5''-triphosphoribosyl)-3'-dephosphocoenzyme-A synthase.